The sequence spans 1701 residues: DDB1- and CUL4-associated factor homolog 1 (1701 aa).

Residues His-224–Gly-245 show a composition bias toward polar residues. Disordered stretches follow at residues His-224–Glu-269, Asp-883–Phe-906, and Arg-932–Leu-961. The 33-residue stretch at Asn-851–Asp-883 folds into the LisH domain. Residues Arg-888–Phe-906 are compositionally biased toward polar residues. 4 WD repeats span residues Asp-1086–His-1125, Cys-1128–His-1169, Tyr-1171–Leu-1210, and Gly-1215–Asp-1252. Short sequence motifs (DWD box) lie at residues Leu-1237 to Asn-1245 and Glu-1275 to Phe-1282. Disordered stretches follow at residues Ile-1384–Leu-1559, Glu-1566–Pro-1585, and Leu-1641–Ala-1701. 2 stretches are compositionally biased toward acidic residues: residues Asn-1390–Ile-1423 and Asp-1451–Phe-1461. Residues Ile-1468 to Arg-1479 show a composition bias toward basic residues. Acidic residues-rich tracts occupy residues Glu-1494 to Phe-1512 and Asp-1520 to Ser-1543. Positions Ala-1567 to Arg-1581 are enriched in basic and acidic residues. Positions Asp-1667–Ile-1678 are enriched in acidic residues.

Belongs to the VPRBP/DCAF1 family. In terms of assembly, component of the cul4-rbx1-ddb1-dcaf1 E3 ubiquitin-protein ligase complex.

It is found in the nucleus. Its pathway is protein modification; protein ubiquitination. Component of the cul4-rbx1-ddb1-dcaf1 E3 ubiquitin-protein ligase complex, dcaf1 may function as the substrate recognition module within this complex. This Caenorhabditis elegans protein is DDB1- and CUL4-associated factor homolog 1 (dcaf-1).